Consider the following 527-residue polypeptide: FHA domain-containing protein FhaA (527 aa).

T116 carries the post-translational modification Phosphothreonine. The disordered stretch occupies residues 119 to 426; sequence FRARGTVNPD…APGGYSGYGQ (308 aa). The segment covering 170–188 has biased composition (basic and acidic residues); the sequence is RPDEYYDDRYARPQEDPRG. 2 stretches are compositionally biased toward low complexity: residues 199–209 and 256–266; these read RGGYPPETGGY and YQDQGRGYPDQ. Over residues 271 to 283 the composition is skewed to pro residues; it reads YPPPYEQRPPVSP. Residues 284–299 show a composition bias toward low complexity; the sequence is GPAAGYGAPGYDQGYR. The segment covering 300–322 has biased composition (gly residues); it reads QSGGYGPSPGGGQPGYGGYGEYG. Over residues 345–366 the composition is skewed to low complexity; that stretch reads RPAYPDQGGYDQGYQQGATTYG. The 50-residue stretch at 455 to 504 folds into the FHA domain; the sequence is NIIGRGQDAQFRLPDTGVSRRHLEIRWDGQVALLADLNSTNGTTVNNAPV.

As to quaternary structure, interacts with (phosphorylated) MviN and (phosphorylated) PknB via the FHA domain. Binds to the PknB juxtamembrane domain with an affinity that is modulated by the degree and the pattern of phosphorylation of this juxtamembrane domain. In terms of processing, phosphorylated by PknB.

It localises to the cytoplasm. Regulates cell growth and peptidoglycan synthesis by binding to MviN. May inhibit the late stages of peptidoglycan synthesis. This chain is FHA domain-containing protein FhaA (fhaA), found in Mycobacterium tuberculosis (strain ATCC 25618 / H37Rv).